We begin with the raw amino-acid sequence, 251 residues long: Probable transcriptional regulatory protein CC_3243 (251 aa).

The protein belongs to the TACO1 family.

Its subcellular location is the cytoplasm. The sequence is that of Probable transcriptional regulatory protein CC_3243 from Caulobacter vibrioides (strain ATCC 19089 / CIP 103742 / CB 15) (Caulobacter crescentus).